A 139-amino-acid chain; its full sequence is Ribosomal RNA large subunit methyltransferase H (139 aa).

S-adenosyl-L-methionine contacts are provided by residues L56, G88, and 107-112; that span reads LSLMTF.

It belongs to the RNA methyltransferase RlmH family. Homodimer.

It localises to the cytoplasm. The enzyme catalyses pseudouridine(1915) in 23S rRNA + S-adenosyl-L-methionine = N(3)-methylpseudouridine(1915) in 23S rRNA + S-adenosyl-L-homocysteine + H(+). Specifically methylates the pseudouridine at position 1915 (m3Psi1915) in 23S rRNA. This Coprothermobacter proteolyticus (strain ATCC 35245 / DSM 5265 / OCM 4 / BT) protein is Ribosomal RNA large subunit methyltransferase H.